The chain runs to 404 residues: Inner membrane transport protein YdiM (404 aa).

Residues Met1–Tyr5 lie on the Periplasmic side of the membrane. A helical transmembrane segment spans residues Phe6–Met26. Over Ser27–Gly43 the chain is Cytoplasmic. A helical transmembrane segment spans residues Val44–Leu64. Residues Leu65–Ala84 lie on the Periplasmic side of the membrane. The chain crosses the membrane as a helical span at residues Phe85 to Ala105. Residues Gly106–Asn132 are Cytoplasmic-facing. A helical transmembrane segment spans residues Ile133–Leu153. The Periplasmic segment spans residues Val154–Glu157. A helical membrane pass occupies residues Leu158–Leu178. Residues Tyr179–Ser206 lie on the Cytoplasmic side of the membrane. Residues Ile207–Val227 form a helical membrane-spanning segment. Residues Ser228–Ser246 lie on the Periplasmic side of the membrane. The chain crosses the membrane as a helical span at residues Ile247 to Leu267. Residues Ile268–Arg273 lie on the Cytoplasmic side of the membrane. The chain crosses the membrane as a helical span at residues Pro274–Leu294. Residues His295 to Pro296 lie on the Periplasmic side of the membrane. Residues Thr297–Val317 form a helical membrane-spanning segment. At Gln318 to Thr336 the chain is on the cytoplasmic side. Residues Gly337–Leu357 form a helical membrane-spanning segment. Over Ser358 to Asp364 the chain is Periplasmic. Residues Ile365 to Leu385 traverse the membrane as a helical segment. Topologically, residues Arg386–Gly404 are cytoplasmic.

It belongs to the major facilitator superfamily.

It is found in the cell inner membrane. The sequence is that of Inner membrane transport protein YdiM (ydiM) from Escherichia coli (strain K12).